A 365-amino-acid chain; its full sequence is 3-dehydroquinate synthase (365 aa).

NAD(+) contacts are provided by residues 107–111 (GVIGD), 131–132 (TS), Lys-144, and Lys-153. Zn(2+) is bound by residues Glu-186, His-251, and His-268.

It belongs to the sugar phosphate cyclases superfamily. Dehydroquinate synthase family. Requires Co(2+) as cofactor. The cofactor is Zn(2+). NAD(+) serves as cofactor.

Its subcellular location is the cytoplasm. The enzyme catalyses 7-phospho-2-dehydro-3-deoxy-D-arabino-heptonate = 3-dehydroquinate + phosphate. It functions in the pathway metabolic intermediate biosynthesis; chorismate biosynthesis; chorismate from D-erythrose 4-phosphate and phosphoenolpyruvate: step 2/7. Its function is as follows. Catalyzes the conversion of 3-deoxy-D-arabino-heptulosonate 7-phosphate (DAHP) to dehydroquinate (DHQ). The sequence is that of 3-dehydroquinate synthase from Crocosphaera subtropica (strain ATCC 51142 / BH68) (Cyanothece sp. (strain ATCC 51142)).